The primary structure comprises 459 residues: MSNRFAVILAAGKGTRMKSKLYKVLHPVCGKPMVQHVVDQVSQLGLQKLVTVVGHGAEKVQEQLGNVSEFALQAEQLGTAHAVDRAADILANEEGTTLVICGDTPLITAETMEALLKHHEEAGAKATVLTAYIEEPAGYGRIVRNENGHVEKIVEHKDANEVELTIKEINTGTYCFDNKALFASLSKVSNDNAQGEYYLPDVIEILKGEGHIVSAYQTEHFDETLGVNDRVALSQAEVIMKNRINHKNMVNGVTIIDPSNTYISADAIIGSDTVIHPGTIIEGKTVIGSDCEIGPHTVIRDSEIGDGTTIRQSTVHDSKIGTEVSVGPFAHIRPDSVIGNEVRVGNFVEIKKTVFGNGSKASHLSYIGDAQIGENVNLGCGSITVNYDGKNKFKTVIGDGVFIGCNSNLVAPVTVEDGAYVAAGSTITENVPSKALSIARARQVNKEDYVDQLLNKKKS.

The pyrophosphorylase stretch occupies residues 1–230 (MSNRFAVILA…FDETLGVNDR (230 aa)). Residues 9–12 (LAAG), lysine 23, glutamine 73, and 78–79 (GT) each bind UDP-N-acetyl-alpha-D-glucosamine. Residue aspartate 103 coordinates Mg(2+). Residues glycine 140, glutamate 155, asparagine 170, and asparagine 228 each contribute to the UDP-N-acetyl-alpha-D-glucosamine site. A Mg(2+)-binding site is contributed by asparagine 228. The segment at 231 to 251 (VALSQAEVIMKNRINHKNMVN) is linker. The segment at 252 to 459 (GVTIIDPSNT…VDQLLNKKKS (208 aa)) is N-acetyltransferase. Positions 333 and 351 each coordinate UDP-N-acetyl-alpha-D-glucosamine. The Proton acceptor role is filled by histidine 363. Positions 366 and 377 each coordinate UDP-N-acetyl-alpha-D-glucosamine. Acetyl-CoA-binding positions include 386 to 387 (NY), alanine 423, and arginine 440.

This sequence in the N-terminal section; belongs to the N-acetylglucosamine-1-phosphate uridyltransferase family. In the C-terminal section; belongs to the transferase hexapeptide repeat family. As to quaternary structure, homotrimer. Mg(2+) is required as a cofactor.

Its subcellular location is the cytoplasm. The enzyme catalyses alpha-D-glucosamine 1-phosphate + acetyl-CoA = N-acetyl-alpha-D-glucosamine 1-phosphate + CoA + H(+). It catalyses the reaction N-acetyl-alpha-D-glucosamine 1-phosphate + UTP + H(+) = UDP-N-acetyl-alpha-D-glucosamine + diphosphate. It participates in nucleotide-sugar biosynthesis; UDP-N-acetyl-alpha-D-glucosamine biosynthesis; N-acetyl-alpha-D-glucosamine 1-phosphate from alpha-D-glucosamine 6-phosphate (route II): step 2/2. Its pathway is nucleotide-sugar biosynthesis; UDP-N-acetyl-alpha-D-glucosamine biosynthesis; UDP-N-acetyl-alpha-D-glucosamine from N-acetyl-alpha-D-glucosamine 1-phosphate: step 1/1. The protein operates within bacterial outer membrane biogenesis; LPS lipid A biosynthesis. Catalyzes the last two sequential reactions in the de novo biosynthetic pathway for UDP-N-acetylglucosamine (UDP-GlcNAc). The C-terminal domain catalyzes the transfer of acetyl group from acetyl coenzyme A to glucosamine-1-phosphate (GlcN-1-P) to produce N-acetylglucosamine-1-phosphate (GlcNAc-1-P), which is converted into UDP-GlcNAc by the transfer of uridine 5-monophosphate (from uridine 5-triphosphate), a reaction catalyzed by the N-terminal domain. This Bacillus cytotoxicus (strain DSM 22905 / CIP 110041 / 391-98 / NVH 391-98) protein is Bifunctional protein GlmU.